A 334-amino-acid polypeptide reads, in one-letter code: Protein NlpD/LppB homolog (334 aa).

A LysM domain is found at 89–133 (IFYIVKSKDTMYSIAKNSGYNYHELSKFNSIKKPYKIIIGQKIWM).

Belongs to the E.coli NlpD/Haemophilus LppB family.

In Buchnera aphidicola subsp. Acyrthosiphon pisum (strain APS) (Acyrthosiphon pisum symbiotic bacterium), this protein is Protein NlpD/LppB homolog.